The chain runs to 127 residues: Large ribosomal subunit protein bL12 (127 aa).

The protein belongs to the bacterial ribosomal protein bL12 family. Homodimer. Part of the ribosomal stalk of the 50S ribosomal subunit. Forms a multimeric L10(L12)X complex, where L10 forms an elongated spine to which 2 to 4 L12 dimers bind in a sequential fashion. Binds GTP-bound translation factors.

Forms part of the ribosomal stalk which helps the ribosome interact with GTP-bound translation factors. Is thus essential for accurate translation. This is Large ribosomal subunit protein bL12 from Acidiphilium cryptum (strain JF-5).